Consider the following 337-residue polypeptide: Geranylgeranyl pyrophosphate synthase subD (337 aa).

Lysine 53, arginine 56, and histidine 85 together coordinate isopentenyl diphosphate. Positions 92 and 96 each coordinate Mg(2+). Dimethylallyl diphosphate is bound at residue arginine 101. Arginine 102 contacts isopentenyl diphosphate. Dimethylallyl diphosphate-binding residues include lysine 179, threonine 180, and glutamine 219. Aspartate 222 contacts Mg(2+). Dimethylallyl diphosphate is bound by residues asparagine 226, lysine 236, and lysine 246.

The protein belongs to the FPP/GGPP synthase family. Mg(2+) is required as a cofactor.

It catalyses the reaction isopentenyl diphosphate + dimethylallyl diphosphate = (2E)-geranyl diphosphate + diphosphate. The catalysed reaction is isopentenyl diphosphate + (2E)-geranyl diphosphate = (2E,6E)-farnesyl diphosphate + diphosphate. The enzyme catalyses isopentenyl diphosphate + (2E,6E)-farnesyl diphosphate = (2E,6E,10E)-geranylgeranyl diphosphate + diphosphate. It participates in secondary metabolite biosynthesis; terpenoid biosynthesis. Its function is as follows. Geranylgeranyl pyrophosphate synthase; part of the gene cluster that mediates the biosynthesis of the immunosuppressants subglutinols, meroterpenoids consisting of an alpha-pyrone (4-hydroxy-5,6-dimethyl-2-pyrone) moiety attached to a decalin core fused to a five-membered cyclic ether carrying a prenylside chain. The first step of the pathway is the synthesis of the alpha-pyrone moiety by the polyketide synthase subA via condensation of one acetyl-CoA starter unit with 3 malonyl-CoA units and 2 methylations. The alpha-pyrone is then combined with geranylgeranyl pyrophosphate (GGPP) formed by the GGPP synthase subD through the action of the prenyltransferase subC to yield a linear alpha-pyrone diterpenoid. Subsequent steps in the subglutinol biosynthetic pathway involve the decalin core formation, which is thought to be initiated by the epoxidation of the C10-C11 olefin by the FAD-dependent oxidoreductase subE. The following cyclization cascade would be catalyzed by the terpene cyclase subB. Lastly, the FAD-dependent dehydrogenase subF probably catalyzes the five-membered cyclic ether formation to complete the formation of subglutinol A. Subsequent redox reactions appear to give rise to subglutinol C and D, however, it remains unclear which enzymes are responsible for these transformations. SubD may have secondary function in the conversion of the identified subglutinols to subglutinol analog 45, which seems to be the major product of the cluster. The sequence is that of Geranylgeranyl pyrophosphate synthase subD from Metarhizium robertsii (strain ARSEF 23 / ATCC MYA-3075) (Metarhizium anisopliae (strain ARSEF 23)).